The primary structure comprises 810 residues: RING finger protein unkempt homolog (810 aa).

Residues 1–24 (MSKGPGPGGSAASSAPPAATAQVL) form a disordered region. Positions 10 to 19 (SAASSAPPAA) are enriched in low complexity. 5 consecutive C3H1-type zinc fingers follow at residues 84 to 113 (YSPD…HRTT), 124 to 154 (YYKT…HGPH), 215 to 241 (NYKT…HNSK), 251 to 285 (KYRS…HTRT), and 293 to 321 (IYKS…HIEP). The disordered stretch occupies residues 239–265 (NSKDRRRSPRKHKYRSSPCPNVKHGDE). Ser-240 bears the Phosphoserine mark. Positions 241–253 (KDRRRSPRKHKYR) are enriched in basic residues. 4 positions are modified to phosphoserine: Ser-374, Ser-378, Ser-385, and Ser-394. The disordered stretch occupies residues 478–497 (TSSLAATPPSPAGTNSTPGM). Position 631 is a phosphoserine (Ser-631). Residues 643–727 (GAAELARLRQ…ERLHTVPEAQ (85 aa)) adopt a coiled-coil conformation. The RING-type; degenerate zinc finger occupies 766-801 (SVKCLKCQEQTRAVLPCQHAVLCELCAEGSECPVCQ).

Belongs to the unkempt family.

The protein resides in the cytoplasm. In terms of biological role, sequence-specific RNA-binding protein which plays an important role in the establishment and maintenance of the early morphology of cortical neurons during embryonic development. Acts as a translation repressor and controls a translationally regulated cell morphology program to ensure proper structuring of the nervous system. Translational control depends on recognition of its binding element within target mRNAs which consists of a mandatory UAG trimer upstream of a U/A-rich motif. Associated with polysomes. In Mus musculus (Mouse), this protein is RING finger protein unkempt homolog (Unk).